Here is a 100-residue protein sequence, read N- to C-terminus: Urease subunit gamma (100 aa).

Belongs to the urease gamma subunit family. As to quaternary structure, heterotrimer of UreA (gamma), UreB (beta) and UreC (alpha) subunits. Three heterotrimers associate to form the active enzyme.

It is found in the cytoplasm. The catalysed reaction is urea + 2 H2O + H(+) = hydrogencarbonate + 2 NH4(+). Its pathway is nitrogen metabolism; urea degradation; CO(2) and NH(3) from urea (urease route): step 1/1. This is Urease subunit gamma from Paenarthrobacter aurescens (strain TC1).